A 141-amino-acid chain; its full sequence is uncharacterized protein (141 aa).

The protein localises to the cytoplasm. This is an uncharacterized protein from Homo sapiens (Human).